Here is a 367-residue protein sequence, read N- to C-terminus: Deoxyhypusine synthase-like protein (367 aa).

A disordered region spans residues methionine 1–proline 23.

The protein belongs to the deoxyhypusine synthase family.

This Caulobacter vibrioides (strain ATCC 19089 / CIP 103742 / CB 15) (Caulobacter crescentus) protein is Deoxyhypusine synthase-like protein.